A 157-amino-acid chain; its full sequence is 2-C-methyl-D-erythritol 2,4-cyclodiphosphate synthase (157 aa).

Positions 9 and 11 each coordinate a divalent metal cation. Residues 9–11 and 35–36 contribute to the 4-CDP-2-C-methyl-D-erythritol 2-phosphate site; these read DVH and HS. Position 43 (histidine 43) interacts with a divalent metal cation. 4-CDP-2-C-methyl-D-erythritol 2-phosphate contacts are provided by residues 57 to 59, 62 to 66, 133 to 136, phenylalanine 140, and lysine 143; these read DIG, FPETD, and TTME.

Belongs to the IspF family. As to quaternary structure, homotrimer. A divalent metal cation is required as a cofactor.

It carries out the reaction 4-CDP-2-C-methyl-D-erythritol 2-phosphate = 2-C-methyl-D-erythritol 2,4-cyclic diphosphate + CMP. Its pathway is isoprenoid biosynthesis; isopentenyl diphosphate biosynthesis via DXP pathway; isopentenyl diphosphate from 1-deoxy-D-xylulose 5-phosphate: step 4/6. In terms of biological role, involved in the biosynthesis of isopentenyl diphosphate (IPP) and dimethylallyl diphosphate (DMAPP), two major building blocks of isoprenoid compounds. Catalyzes the conversion of 4-diphosphocytidyl-2-C-methyl-D-erythritol 2-phosphate (CDP-ME2P) to 2-C-methyl-D-erythritol 2,4-cyclodiphosphate (ME-CPP) with a corresponding release of cytidine 5-monophosphate (CMP). The chain is 2-C-methyl-D-erythritol 2,4-cyclodiphosphate synthase from Enterococcus faecalis (strain ATCC 700802 / V583).